The following is a 373-amino-acid chain: Histidinol-phosphate aminotransferase (373 aa).

The residue at position 230 (Lys-230) is an N6-(pyridoxal phosphate)lysine.

This sequence belongs to the class-II pyridoxal-phosphate-dependent aminotransferase family. Histidinol-phosphate aminotransferase subfamily. In terms of assembly, homodimer. Requires pyridoxal 5'-phosphate as cofactor.

The catalysed reaction is L-histidinol phosphate + 2-oxoglutarate = 3-(imidazol-4-yl)-2-oxopropyl phosphate + L-glutamate. It participates in amino-acid biosynthesis; L-histidine biosynthesis; L-histidine from 5-phospho-alpha-D-ribose 1-diphosphate: step 7/9. This chain is Histidinol-phosphate aminotransferase, found in Synechococcus elongatus (strain ATCC 33912 / PCC 7942 / FACHB-805) (Anacystis nidulans R2).